Reading from the N-terminus, the 364-residue chain is Alpha-2-HS-glycoprotein (364 aa).

Residues 1 to 15 (MKSFLLLFCLAQLCS) constitute a signal peptide (or 17). The Cystatin fetuin-A-type 1 domain maps to 27–133 (YKEPACDDPD…QFSVLFTKCD (107 aa)). Cystine bridges form between Cys32–Cys355, Cys89–Cys100, Cys114–Cys132, Cys146–Cys149, Cys208–Cys219, and Cys230–Cys248. Asn99 carries N-linked (GlcNAc...) asparagine glycosylation. Ser134, Ser135, and Ser138 each carry phosphoserine. The region spanning 144 to 256 (KLCPDCPLLA…TCTLFQTQPV (113 aa)) is the Cystatin fetuin-A-type 2 domain. Residues Asn156 and Asn176 are each glycosylated (N-linked (GlcNAc...) asparagine). An O-linked (GalNAc...) serine glycan is attached at Ser301. A Phosphothreonine modification is found at Thr319. Ser321, Ser325, Ser328, and Ser330 each carry phosphoserine. The O-linked (GalNAc...) threonine glycan is linked to Thr339.

The protein belongs to the fetuin family. Phosphorylated by FAM20C in the extracellular medium.

It localises to the secreted. The sequence is that of Alpha-2-HS-glycoprotein (AHSG) from Ovis aries (Sheep).